A 245-amino-acid chain; its full sequence is Transcription factor FUP7 (245 aa).

The zn(2)-C6 fungal-type DNA-binding region spans 10-37 (CKTCRSRKQKCDGIRPACSRCRSLGLQC). The disordered stretch occupies residues 162-216 (ESSSGNADYQHEDEVQSPAGAGDDMAVGDPYRDDSVDQDSIGQPPQRTESVGNMQ). Positions 199–214 (QDSIGQPPQRTESVGN) are enriched in polar residues.

The protein localises to the nucleus. Functionally, transcription factor; part of the gene cluster that mediates the biosynthesis of the mycotoxin fusaproliferin (FUP) that belongs to the class of bicyclic sesterterpenoids. This is Transcription factor FUP7 from Fusarium proliferatum (strain ET1) (Orchid endophyte fungus).